The chain runs to 345 residues: MVVPSPTSMIRTKKTKAVGIPTIDLSLERSQLSELVVKACEEYGFFKVVNHSVPKEVISRLDEEGIEFFSKNSSEKRQAGTSTPFGYGCKNIGPNGDKGELEYLLLHSNPISISERSKTIAKDHPIKFSCIVNDYIKAVKDLTCEILELAAEGLWVPDKSSLSKIIKDEHSDSLLRINHYPPVKKLGNDNWDPSKIQNSNNNNIGFGEHSDPQILTILRSNNVGGLQISTHHGLWIPVPPDPSEFYVMVGDALQVLTNGRFVSVRHRVLTNTTKPRMSMMYFAAPPLNWLISPLSKMVTAHSPCLYRPFTWAQYKQAAYALRLGDTRLDQFKVQKQEDSNDSHSL.

Positions 170–285 constitute a Fe2OG dioxygenase domain; the sequence is HSDSLLRINH…RMSMMYFAAP (116 aa). Positions 209, 211, and 266 each coordinate Fe cation. Arginine 276 is a catalytic residue.

This sequence belongs to the iron/ascorbate-dependent oxidoreductase family. GA2OX subfamily. Fe cation is required as a cofactor. Predominantly expressed in leaves.

The enzyme catalyses gibberellin A1 + 2-oxoglutarate + O2 = gibberellin A8 + succinate + CO2. It functions in the pathway plant hormone biosynthesis; gibberellin biosynthesis. In terms of biological role, catalyzes the 2-beta-hydroxylation of several biologically active gibberellins, leading to the homeostatic regulation of their endogenous level. Catabolism of gibberellins (GAs) plays a central role in plant development. Converts GA9/GA20 to GA51/GA29 and GA4/GA1 to GA34/GA8. In Pisum sativum (Garden pea), this protein is Gibberellin 2-beta-dioxygenase 2 (GA2OX2).